Here is a 407-residue protein sequence, read N- to C-terminus: Cysteine desulfurase (407 aa).

Lys226 carries the N6-(pyridoxal phosphate)lysine modification. Cys364 acts as the Cysteine persulfide intermediate in catalysis.

The protein belongs to the class-V pyridoxal-phosphate-dependent aminotransferase family. Csd subfamily. In terms of assembly, homodimer. Interacts with SufE and the SufBCD complex composed of SufB, SufC and SufD. The interaction with SufE is required to mediate the direct transfer of the sulfur atom from the S-sulfanylcysteine. Pyridoxal 5'-phosphate is required as a cofactor.

The protein resides in the cytoplasm. It carries out the reaction (sulfur carrier)-H + L-cysteine = (sulfur carrier)-SH + L-alanine. The enzyme catalyses L-selenocysteine + AH2 = hydrogenselenide + L-alanine + A + H(+). It participates in cofactor biosynthesis; iron-sulfur cluster biosynthesis. Cysteine desulfurases mobilize the sulfur from L-cysteine to yield L-alanine, an essential step in sulfur metabolism for biosynthesis of a variety of sulfur-containing biomolecules. Component of the suf operon, which is activated and required under specific conditions such as oxidative stress and iron limitation. Acts as a potent selenocysteine lyase in vitro, that mobilizes selenium from L-selenocysteine. Selenocysteine lyase activity is however unsure in vivo. In Pectobacterium atrosepticum (strain SCRI 1043 / ATCC BAA-672) (Erwinia carotovora subsp. atroseptica), this protein is Cysteine desulfurase.